The following is a 189-amino-acid chain: Segregation and condensation protein B (189 aa).

This sequence belongs to the ScpB family. In terms of assembly, homodimer. Homodimerization may be required to stabilize the binding of ScpA to the Smc head domains. Component of a cohesin-like complex composed of ScpA, ScpB and the Smc homodimer, in which ScpA and ScpB bind to the head domain of Smc. The presence of the three proteins is required for the association of the complex with DNA.

The protein resides in the cytoplasm. Functionally, participates in chromosomal partition during cell division. May act via the formation of a condensin-like complex containing Smc and ScpA that pull DNA away from mid-cell into both cell halves. The chain is Segregation and condensation protein B from Streptococcus pneumoniae serotype 19F (strain G54).